A 357-amino-acid chain; its full sequence is MDSVEKTTNRSEQKSRKFLKSLIRKQPQELLLVIGTGVSAAVAPGIPALCSWRSCIEAVIEAAEQLEVLHPGDVAEFRRKVTKDRDLLVVAHDLIRKMSPRTGDAKPSFFQDCLMEVFDDLEQHIRSPVVLQSILSLMDRGAMVLTTNYDNLLEAFGRRQNKPMESLDLKDKTKVLEWARGHMKYGVLHIHGLYTDPCGVVLDPSGYKDVTQDAEVMEVLQNLYRTKSFLFVGCGETLRDQIFQALFLYSVPNKVDLEHYMLVLKENEDHFFKHQADMLLHGIKVVSYGDCFDHFPGYVQDLATQICKQQSPDADRVDSTTLLGNACQDCAKRKLEENGIEVSKKRTQSDTDDAGGS.

Met1 carries the post-translational modification N-acetylmethionine. The chain crosses the membrane as a helical span at residues 30–50 (LLLVIGTGVSAAVAPGIPALC). Ser311 bears the Phosphoserine mark.

The protein belongs to the FAM118 family.

The protein localises to the membrane. In Homo sapiens (Human), this protein is Protein FAM118A (FAM118A).